Reading from the N-terminus, the 311-residue chain is HPr kinase/phosphorylase (311 aa).

Active-site residues include histidine 138 and lysine 159. 153–160 contacts ATP; it reads GDSGIGKS. A Mg(2+)-binding site is contributed by serine 160. Aspartate 177 functions as the Proton acceptor; for phosphorylation activity. Proton donor; for dephosphorylation activity in the catalytic mechanism. The important for the catalytic mechanism of both phosphorylation and dephosphorylation stretch occupies residues 201 to 210; that stretch reads LEIRGVGIID. Residue glutamate 202 participates in Mg(2+) binding. Residue arginine 243 is part of the active site. Residues 264-269 form an important for the catalytic mechanism of dephosphorylation region; sequence PVKTGR.

It belongs to the HPrK/P family. Homohexamer. Requires Mg(2+) as cofactor.

It catalyses the reaction [HPr protein]-L-serine + ATP = [HPr protein]-O-phospho-L-serine + ADP + H(+). It carries out the reaction [HPr protein]-O-phospho-L-serine + phosphate + H(+) = [HPr protein]-L-serine + diphosphate. In terms of biological role, catalyzes the ATP- as well as the pyrophosphate-dependent phosphorylation of a specific serine residue in HPr, a phosphocarrier protein of the phosphoenolpyruvate-dependent sugar phosphotransferase system (PTS). HprK/P also catalyzes the pyrophosphate-producing, inorganic phosphate-dependent dephosphorylation (phosphorolysis) of seryl-phosphorylated HPr (P-Ser-HPr). The two antagonistic activities of HprK/P are regulated by several intracellular metabolites, which change their concentration in response to the absence or presence of rapidly metabolisable carbon sources (glucose, fructose, etc.) in the growth medium. Therefore, by controlling the phosphorylation state of HPr, HPrK/P is a sensor enzyme that plays a major role in the regulation of carbon metabolism and sugar transport: it mediates carbon catabolite repression (CCR), and regulates PTS-catalyzed carbohydrate uptake and inducer exclusion. The sequence is that of HPr kinase/phosphorylase from Streptococcus sanguinis (strain SK36).